The chain runs to 581 residues: Proline--tRNA ligase (581 aa).

It belongs to the class-II aminoacyl-tRNA synthetase family. ProS type 1 subfamily. Homodimer.

The protein localises to the cytoplasm. It catalyses the reaction tRNA(Pro) + L-proline + ATP = L-prolyl-tRNA(Pro) + AMP + diphosphate. Its function is as follows. Catalyzes the attachment of proline to tRNA(Pro) in a two-step reaction: proline is first activated by ATP to form Pro-AMP and then transferred to the acceptor end of tRNA(Pro). As ProRS can inadvertently accommodate and process non-cognate amino acids such as alanine and cysteine, to avoid such errors it has two additional distinct editing activities against alanine. One activity is designated as 'pretransfer' editing and involves the tRNA(Pro)-independent hydrolysis of activated Ala-AMP. The other activity is designated 'posttransfer' editing and involves deacylation of mischarged Ala-tRNA(Pro). The misacylated Cys-tRNA(Pro) is not edited by ProRS. In Leptothrix cholodnii (strain ATCC 51168 / LMG 8142 / SP-6) (Leptothrix discophora (strain SP-6)), this protein is Proline--tRNA ligase.